The following is a 235-amino-acid chain: 7-cyano-7-deazaguanine synthase (235 aa).

Position 12–22 (12–22) interacts with ATP; it reads FSGGQDSTACL. 4 residues coordinate Zn(2+): cysteine 200, cysteine 215, cysteine 218, and cysteine 221.

It belongs to the QueC family. Zn(2+) serves as cofactor.

The enzyme catalyses 7-carboxy-7-deazaguanine + NH4(+) + ATP = 7-cyano-7-deazaguanine + ADP + phosphate + H2O + H(+). It functions in the pathway purine metabolism; 7-cyano-7-deazaguanine biosynthesis. Its function is as follows. Catalyzes the ATP-dependent conversion of 7-carboxy-7-deazaguanine (CDG) to 7-cyano-7-deazaguanine (preQ(0)). The chain is 7-cyano-7-deazaguanine synthase from Methylibium petroleiphilum (strain ATCC BAA-1232 / LMG 22953 / PM1).